The chain runs to 55 residues: Protein CADMIUM TOLERANCE 2 (55 aa).

A helical transmembrane segment spans residues 24 to 40 (GCLYACIFTALCCFCCY).

This sequence belongs to the CYSTM1 family. As to expression, expressed only in roots.

It is found in the cell membrane. The protein localises to the secreted. The protein resides in the cell wall. Its function is as follows. Confers resistance to heavy metal ions (e.g. cadmium (CdCl(2)) and copper (CuCl(2))) by chelating them at the plasma membrane of root cells, thus stopping their entry and reducing their accumulation. The polypeptide is Protein CADMIUM TOLERANCE 2 (Oryza sativa subsp. japonica (Rice)).